The chain runs to 169 residues: MNNLTLSLRRERRLLVLLALVCLALLAGALYLQYVKNEDPCPLCIIQRYFFVLIAVFAFIGAGMASGAGVAVTEALIVLSAAAGVGTAARHLYVQLNPGFSCGFDALQPVVDSLPPARWLPGVFKVAGLCETVYPPIFGILLPGWALIAFVLIAVPVAVSLLRHRGRLR.

Topologically, residues 1–14 are cytoplasmic; it reads MNNLTLSLRRERRL. The helical transmembrane segment at 15–31 threads the bilayer; that stretch reads LVLLALVCLALLAGALY. Over 32 to 49 the chain is Periplasmic; the sequence is LQYVKNEDPCPLCIIQRY. A disulfide bridge links cysteine 41 with cysteine 44. The helical transmembrane segment at 50-64 threads the bilayer; sequence FFVLIAVFAFIGAGM. Over 65-71 the chain is Cytoplasmic; that stretch reads ASGAGVA. The chain crosses the membrane as a helical span at residues 72-89; that stretch reads VTEALIVLSAAAGVGTAA. The Periplasmic portion of the chain corresponds to 90 to 144; sequence RHLYVQLNPGFSCGFDALQPVVDSLPPARWLPGVFKVAGLCETVYPPIFGILLPG. Residues cysteine 102 and cysteine 130 are joined by a disulfide bond. Residues 145 to 163 traverse the membrane as a helical segment; it reads WALIAFVLIAVPVAVSLLR. Topologically, residues 164 to 169 are cytoplasmic; it reads HRGRLR.

This sequence belongs to the DsbB family.

Its subcellular location is the cell inner membrane. Functionally, required for disulfide bond formation in some periplasmic proteins. Acts by oxidizing the DsbA protein. In Burkholderia mallei (strain ATCC 23344), this protein is Disulfide bond formation protein B.